The sequence spans 379 residues: Chaperone protein DnaJ (379 aa).

Residues 5–70 (DYYETLEVSQ…QKRAAYDQYG (66 aa)) enclose the J domain. Residues 135–213 (GKSLEIKVPT…CRGQGRVEKT (79 aa)) form a CR-type zinc finger. Zn(2+) is bound by residues Cys148, Cys151, Cys165, Cys168, Cys187, Cys190, Cys201, and Cys204. CXXCXGXG motif repeat units follow at residues 148–155 (CEPCDGSG), 165–172 (CSTCHGHG), 187–194 (CPTCSGKG), and 201–208 (CTSCRGQG).

It belongs to the DnaJ family. As to quaternary structure, homodimer. Zn(2+) serves as cofactor.

It is found in the cytoplasm. In terms of biological role, participates actively in the response to hyperosmotic and heat shock by preventing the aggregation of stress-denatured proteins and by disaggregating proteins, also in an autonomous, DnaK-independent fashion. Unfolded proteins bind initially to DnaJ; upon interaction with the DnaJ-bound protein, DnaK hydrolyzes its bound ATP, resulting in the formation of a stable complex. GrpE releases ADP from DnaK; ATP binding to DnaK triggers the release of the substrate protein, thus completing the reaction cycle. Several rounds of ATP-dependent interactions between DnaJ, DnaK and GrpE are required for fully efficient folding. Also involved, together with DnaK and GrpE, in the DNA replication of plasmids through activation of initiation proteins. The chain is Chaperone protein DnaJ from Colwellia maris.